The chain runs to 558 residues: NXPE family member 2 (558 aa).

Residues 17 to 37 traverse the membrane as a helical segment; sequence ASARKLFLIVLIIFVFWVVFM.

This sequence belongs to the NXPE family.

It localises to the membrane. The sequence is that of NXPE family member 2 (Nxpe2) from Mus musculus (Mouse).